Reading from the N-terminus, the 626-residue chain is Ankyrin repeat domain-containing protein 55 (626 aa).

9 ANK repeats span residues 25-54 (VDLAMVYQAASNGDVNSLTSVIREDPSILE), 59-88 (EGCTPLMHAVSGRQVDTVKLLLKMGANINT), 92-124 (YGRTSLCLATYLGWLEGCVSLLRNGAKHNIPDK), 125-156 (NGRLPLHAATAEPDVRLLIVLLQQSSLSEINH), 160-189 (EGMTPLHWAAFHNRPQHTQMLLKKGADPTL), 193-222 (DFKTALHWAVQSGNRILCSIILSHRQGPSI), 229-259 (SGKTCVHIAAASGFGDIINDLAKVPECNLQA), 263-292 (DDRTPLHWAAASGKAECVQSLLDLGMDSNL), and 296-325 (NESTPLAYALYCGHTACVRLLSREGRAEPA). Basic and acidic residues predominate over residues 354-372 (KEEQKAHQKDQSRARPKEE). Disordered stretches follow at residues 354–377 (KEEQKAHQKDQSRARPKEEETSEV), 455–491 (HAGLNAGPQHTAQRSQKSRSEQDLLNNRTGCPVSLEN), and 522–626 (QPGH…HDEN). Ser474 is subject to Phosphoserine. Residues 604–614 (QRGHDPPRAEE) are compositionally biased toward basic and acidic residues. Positions 616 to 626 (GGSSSPTHDEN) are enriched in polar residues.

In Mus musculus (Mouse), this protein is Ankyrin repeat domain-containing protein 55 (Ankrd55).